Here is a 292-residue protein sequence, read N- to C-terminus: Phosphoenolpyruvate guanylyltransferase (292 aa).

The phosphoenolpyruvate site is built by Thr-168, Gly-184, and Ser-187. The segment at 243-292 (PLVAEDSGGSGGESGTSAESGLSVPPGIVGGTQRRIVSDASGPGRAKKYP) is disordered.

This sequence belongs to the CofC family.

It carries out the reaction phosphoenolpyruvate + GTP + H(+) = enolpyruvoyl-2-diphospho-5'-guanosine + diphosphate. It participates in cofactor biosynthesis; coenzyme F420 biosynthesis. Its function is as follows. Guanylyltransferase that catalyzes the activation of phosphoenolpyruvate (PEP) as enolpyruvoyl-2-diphospho-5'-guanosine, via the condensation of PEP with GTP. It is involved in the biosynthesis of coenzyme F420, a hydride carrier cofactor. This Frankia casuarinae (strain DSM 45818 / CECT 9043 / HFP020203 / CcI3) protein is Phosphoenolpyruvate guanylyltransferase.